Reading from the N-terminus, the 94-residue chain is Neutrophil antibiotic peptide NP-1 (94 aa).

The first 19 residues, 1–19, serve as a signal peptide directing secretion; the sequence is MRTLTLLTALLLLALHTQA. Positions 20–62 are excised as a propeptide; it reads KSPQGTAEEAPDQEQLVMEDQDISISFGGDKGTALQDADVKAG. 3 cysteine pairs are disulfide-bonded: C65–C93, C67–C82, and C72–C92. Y84 is subject to Phosphotyrosine.

This sequence belongs to the alpha-defensin family. In terms of tissue distribution, highest expression in bone marrow and to a much lesser extent in small intestine.

The protein localises to the secreted. In terms of biological role, active in vitro against S.aureus, fungi, Gram-positive and Gram-negative bacteria and to a lesser extent against an enveloped virus. The polypeptide is Neutrophil antibiotic peptide NP-1 (Rattus norvegicus (Rat)).